The following is a 347-amino-acid chain: Heat-inducible transcription repressor HrcA (347 aa).

It belongs to the HrcA family.

Functionally, negative regulator of class I heat shock genes (grpE-dnaK-dnaJ and groELS operons). Prevents heat-shock induction of these operons. The polypeptide is Heat-inducible transcription repressor HrcA (Sorangium cellulosum (strain So ce56) (Polyangium cellulosum (strain So ce56))).